Reading from the N-terminus, the 139-residue chain is Small ribosomal subunit protein uS12m (139 aa).

The N-terminal 29 residues, 1-29, are a transit peptide targeting the mitochondrion; that stretch reads MSWSGPLRGLNTSLTCGPALVPRLWATCS. The interval 36 to 56 is disordered; the sequence is MHRLGGPPKRPPQKLGPTEGR.

The protein belongs to the universal ribosomal protein uS12 family. In terms of assembly, component of the mitochondrial ribosome small subunit (28S) which comprises a 12S rRNA and about 30 distinct proteins.

It is found in the mitochondrion. The polypeptide is Small ribosomal subunit protein uS12m (MRPS12) (Pongo abelii (Sumatran orangutan)).